We begin with the raw amino-acid sequence, 354 residues long: S-adenosylmethionine:tRNA ribosyltransferase-isomerase (354 aa).

This sequence belongs to the QueA family. As to quaternary structure, monomer.

Its subcellular location is the cytoplasm. It carries out the reaction 7-aminomethyl-7-carbaguanosine(34) in tRNA + S-adenosyl-L-methionine = epoxyqueuosine(34) in tRNA + adenine + L-methionine + 2 H(+). Its pathway is tRNA modification; tRNA-queuosine biosynthesis. Transfers and isomerizes the ribose moiety from AdoMet to the 7-aminomethyl group of 7-deazaguanine (preQ1-tRNA) to give epoxyqueuosine (oQ-tRNA). In Salmonella paratyphi A (strain ATCC 9150 / SARB42), this protein is S-adenosylmethionine:tRNA ribosyltransferase-isomerase.